Reading from the N-terminus, the 324-residue chain is Mitochondrial oxaloacetate transport protein (324 aa).

3 Solcar repeats span residues 20–111 (ISKF…IRSS), 126–218 (QSVG…AKNI), and 227–312 (DGPA…TMKL). 6 helical membrane passes run 26–46 (FVAG…IELI), 79–99 (GIKG…GLNG), 132–152 (VFSG…LFLV), 193–213 (GIDA…PIYN), 233–253 (LTAS…WDVI), and 284–305 (LYKG…CLTF).

The protein belongs to the mitochondrial carrier (TC 2.A.29) family.

The protein localises to the mitochondrion inner membrane. It catalyses the reaction a dicarboxylate(in) + sulfate(out) = a dicarboxylate(out) + sulfate(in). The catalysed reaction is (2S)-2-isopropylmalate(in) + sulfate(out) = (2S)-2-isopropylmalate(out) + sulfate(in). The enzyme catalyses (2R,3S)-3-isopropylmalate(in) + sulfate(out) = (2R,3S)-3-isopropylmalate(out) + sulfate(in). It carries out the reaction malonate(in) + sulfate(out) = malonate(out) + sulfate(in). It catalyses the reaction oxaloacetate(in) + sulfate(out) = oxaloacetate(out) + sulfate(in). The catalysed reaction is thiosulfate(in) + sulfate(out) = thiosulfate(out) + sulfate(in). Its activity is regulated as follows. Inhibited by alpha-keto isocaproate, an intermediate of leucine biosynthesis pathway. Antiporter that exchanges dicarboxylates and sulfur oxoanions across the inner membrane of mitochondria. Exports alpha-isopropylmalate from mitochondrial matrix to the cytosol, where it serves as a precursor for leucine biosynthesis. The protein is Mitochondrial oxaloacetate transport protein (OAC1) of Saccharomyces cerevisiae (strain ATCC 204508 / S288c) (Baker's yeast).